We begin with the raw amino-acid sequence, 349 residues long: Succinylglutamate desuccinylase (349 aa).

Residues H70, E73, and H166 each coordinate Zn(2+). E229 is a catalytic residue.

This sequence belongs to the AspA/AstE family. Succinylglutamate desuccinylase subfamily. It depends on Zn(2+) as a cofactor.

It catalyses the reaction N-succinyl-L-glutamate + H2O = L-glutamate + succinate. Its pathway is amino-acid degradation; L-arginine degradation via AST pathway; L-glutamate and succinate from L-arginine: step 5/5. Functionally, transforms N(2)-succinylglutamate into succinate and glutamate. The protein is Succinylglutamate desuccinylase of Burkholderia thailandensis (strain ATCC 700388 / DSM 13276 / CCUG 48851 / CIP 106301 / E264).